Here is a 790-residue protein sequence, read N- to C-terminus: Eukaryotic translation initiation factor 3 subunit C (790 aa).

Positions 1-62 are disordered; it reads MSRFFVSGYN…DGRPSGPAYF (62 aa). Residues 14-53 are compositionally biased toward acidic residues; the sequence is SSEEEDLLSSEEELLTSSGEENEDSDFFNDDDESSSDEED. The 173-residue stretch at 556–728 folds into the PCI domain; the sequence is FHQHINLELL…IVFTTDSQRS (173 aa). The segment at 748-790 is disordered; the sequence is NEKTSSNGYAKKNQSQTQPQAQSKEVEENKFRYANVNTNTDEF. Residues 751-770 are compositionally biased toward polar residues; sequence TSSNGYAKKNQSQTQPQAQS.

It belongs to the eIF-3 subunit C family. In terms of assembly, component of the eukaryotic translation initiation factor 3 (eIF-3) complex.

Its subcellular location is the cytoplasm. In terms of biological role, component of the eukaryotic translation initiation factor 3 (eIF-3) complex, which is involved in protein synthesis of a specialized repertoire of mRNAs and, together with other initiation factors, stimulates binding of mRNA and methionyl-tRNAi to the 40S ribosome. The eIF-3 complex specifically targets and initiates translation of a subset of mRNAs involved in cell proliferation. The chain is Eukaryotic translation initiation factor 3 subunit C from Lodderomyces elongisporus (strain ATCC 11503 / CBS 2605 / JCM 1781 / NBRC 1676 / NRRL YB-4239) (Yeast).